We begin with the raw amino-acid sequence, 148 residues long: MKLDLKILDARMRDYLPAYATTGSAGLDLRACLDAPVTLQPGETTLVPTGLAIHLADPGYAALILPRSGLGHKHGIVLGNLVGLIDSDYQGQLMISTWNRGQTEFVLNPFERLAQLVIVPVVQAQFNIVDDFAESDRGDGGFGSTGRH.

Residues 67–69, asparagine 80, 84–86, and methionine 94 contribute to the substrate site; these read RSG and LID.

Belongs to the dUTPase family. It depends on Mg(2+) as a cofactor.

The catalysed reaction is dUTP + H2O = dUMP + diphosphate + H(+). It functions in the pathway pyrimidine metabolism; dUMP biosynthesis; dUMP from dCTP (dUTP route): step 2/2. Its function is as follows. This enzyme is involved in nucleotide metabolism: it produces dUMP, the immediate precursor of thymidine nucleotides and it decreases the intracellular concentration of dUTP so that uracil cannot be incorporated into DNA. The polypeptide is Deoxyuridine 5'-triphosphate nucleotidohydrolase (Burkholderia lata (strain ATCC 17760 / DSM 23089 / LMG 22485 / NCIMB 9086 / R18194 / 383)).